A 509-amino-acid chain; its full sequence is Cysteine--tRNA ligase (509 aa).

A Zn(2+)-binding site is contributed by Cys-19. The 'HIGH' region signature appears at 21–31; it reads PTVYNDAHIGH. Positions 213, 238, and 242 each coordinate Zn(2+). A 'KMSKS' region motif is present at residues 284–288; the sequence is KMSKS. Lys-287 is a binding site for ATP.

This sequence belongs to the class-I aminoacyl-tRNA synthetase family. Requires Zn(2+) as cofactor.

The enzyme catalyses tRNA(Cys) + L-cysteine + ATP = L-cysteinyl-tRNA(Cys) + AMP + diphosphate. The sequence is that of Cysteine--tRNA ligase (CARS) from Acanthamoeba polyphaga (Amoeba).